The primary structure comprises 200 residues: Putative 3-methyladenine DNA glycosylase (200 aa).

It belongs to the DNA glycosylase MPG family.

The protein is Putative 3-methyladenine DNA glycosylase of Methanocella arvoryzae (strain DSM 22066 / NBRC 105507 / MRE50).